A 316-amino-acid polypeptide reads, in one-letter code: MAVFDPDLQPSSDRGHLLTEQSNQRSSHLDQLDTLALLELFADEDRRPQEAVAAVAPALAQAVDAVANRLRAGGRLFYLGAGTSGRLGVLDAAECPPTFCSDPQQVQGVLAGGSAALLRSSEGLEDIEAAGRADLEERGFSTKDCLVGIAAGGTTPYVRGGLAFAKSIGALAIALACVPTEQAPLPCDIDIRLLTGPELLTGSTRMKAGTATKLALNTLSTAVMVKLGKVYGNRMVDVAASNSKLVDRSLRILRDLAGVERERGLTLLEEAGGSVKLALLMAAAGLSVDQAKAHLQQYDQQLRPALAAYGAQLAEA.

Residues 1 to 25 (MAVFDPDLQPSSDRGHLLTEQSNQR) are disordered. An SIS domain is found at 66–229 (VANRLRAGGR…STAVMVKLGK (164 aa)). Glu-94 acts as the Proton donor in catalysis. Glu-125 is a catalytic residue.

This sequence belongs to the GCKR-like family. MurNAc-6-P etherase subfamily. Homodimer.

It carries out the reaction N-acetyl-D-muramate 6-phosphate + H2O = N-acetyl-D-glucosamine 6-phosphate + (R)-lactate. Its pathway is amino-sugar metabolism; N-acetylmuramate degradation. Its function is as follows. Specifically catalyzes the cleavage of the D-lactyl ether substituent of MurNAc 6-phosphate, producing GlcNAc 6-phosphate and D-lactate. In Synechococcus sp. (strain CC9605), this protein is N-acetylmuramic acid 6-phosphate etherase.